A 708-amino-acid polypeptide reads, in one-letter code: Leukotoxin translocation ATP-binding protein LktB (708 aa).

The Peptidase C39 domain occupies 1–126 (MEANHQRNDL…ACYQGQLILV (126 aa)). Residues 155–437 (FLETLIVSIF…LAQLWQDFQQ (283 aa)) form the ABC transmembrane type-1 domain. 5 consecutive transmembrane segments (helical) span residues 159–179 (LIVS…FQVV), 192–212 (LNII…LSGL), 270–290 (ALTS…MWYY), 296–316 (LVIL…SPIL), and 389–409 (VMVI…LSIG). The ABC transporter domain maps to 469–704 (ISFKNIRFRY…SNGLYSYLHQ (236 aa)). 503–510 (GRSGSGKS) is an ATP binding site.

This sequence belongs to the ABC transporter superfamily. Protein-1 exporter (TC 3.A.1.109) family. As to quaternary structure, homodimer.

The protein resides in the cell inner membrane. The catalysed reaction is ATP + H2O + proteinSide 1 = ADP + phosphate + proteinSide 2.. Its function is as follows. Part of the ABC transporter complex LktBD involved in leukotoxin export. Transmembrane domains (TMD) form a pore in the inner membrane and the ATP-binding domain (NBD) is responsible for energy generation. The sequence is that of Leukotoxin translocation ATP-binding protein LktB (lktB) from Bibersteinia trehalosi (Pasteurella trehalosi).